Reading from the N-terminus, the 510-residue chain is Beta-glucosidase 12 (510 aa).

An N-terminal signal peptide occupies residues 1 to 24 (MAAAGAMPGGLLLTFLLLAVVASG). An a beta-D-glucoside-binding site is contributed by Gln-53. Residue Asn-122 is glycosylated (N-linked (GlcNAc...) asparagine). A beta-D-glucoside contacts are provided by residues His-157 and 202-203 (NE). Glu-203 acts as the Proton donor in catalysis. Disulfide bonds link Cys-208–Cys-243 and Cys-222–Cys-230. A glycan (N-linked (GlcNAc...) asparagine) is linked at Asn-229. Tyr-346 is an a beta-D-glucoside binding site. N-linked (GlcNAc...) asparagine glycans are attached at residues Asn-361 and Asn-371. Position 417 (Glu-417) interacts with a beta-D-glucoside. The Nucleophile role is filled by Glu-417. Asn-425 carries an N-linked (GlcNAc...) asparagine glycan. Residues Trp-466, 473-474 (EW), and Phe-482 contribute to the a beta-D-glucoside site.

The protein belongs to the glycosyl hydrolase 1 family.

Its subcellular location is the secreted. It catalyses the reaction Hydrolysis of terminal, non-reducing beta-D-glucosyl residues with release of beta-D-glucose.. Functionally, hydrolyzes p-nitrophenyl beta-D-glucoside, p-nitrophenyl beta-D-galactoside, p-nitrophenyl beta-D-xyloside, p-nitrophenyl beta-D-fucoside, p-nitrophenyl beta-L-arabinoside, cello-oligosaccharides and laminaribiose. This chain is Beta-glucosidase 12, found in Oryza sativa subsp. indica (Rice).